Reading from the N-terminus, the 229-residue chain is MEHSFKTITAGVVFVVLLLQQAPVLIRATDADPLQDFCVADLDSKVTVNGHACKPASAAGDEFLFSSKIATGGDVNANPNGSNVTELDVAEWPGVNTLGVSMNRVDFAPGGTNPPHVHPRATEVGIVLRGELLVGIIGTLDMGNRYYSKVVRAGETFVIPRGLMHFQFNVGKTEATMVVSFNSQNPGIVFVPLTLFGSNPPIPTPVLVKALRVDTGVVELLKSKFTGGY.

An N-terminal signal peptide occupies residues 1–31 (MEHSFKTITAGVVFVVLLLQQAPVLIRATDA). Residues Cys-38 and Cys-53 are joined by a disulfide bond. Positions 67 to 219 (SKIATGGDVN…ALRVDTGVVE (153 aa)) constitute a Cupin type-1 domain. Asn-80 and Asn-83 each carry an N-linked (GlcNAc...) asparagine glycan. Mn(2+) is bound by residues His-116, His-118, Glu-123, and His-165.

This sequence belongs to the germin family. As to quaternary structure, oligomer (believed to be a pentamer but probably hexamer).

The protein localises to the secreted. Its subcellular location is the extracellular space. The protein resides in the apoplast. Its function is as follows. May play a role in plant defense. Probably has no oxalate oxidase activity even if the active site is conserved. The sequence is that of Putative germin-like protein 3-4 from Oryza sativa subsp. japonica (Rice).